The following is a 294-amino-acid chain: Nucleotide-binding protein CLJ_B3680 (294 aa).

8-15 (GLSGAGKT) contacts ATP. 59-62 (DIRG) is a binding site for GTP.

Belongs to the RapZ-like family.

Its function is as follows. Displays ATPase and GTPase activities. This Clostridium botulinum (strain 657 / Type Ba4) protein is Nucleotide-binding protein CLJ_B3680.